Consider the following 475-residue polypeptide: Putative aldehyde dehydrogenase SSP0762 (475 aa).

201-207 (GDGQGVG) lines the NAD(+) pocket. Active-site residues include Glu-245 and Cys-279.

It belongs to the aldehyde dehydrogenase family.

The catalysed reaction is an aldehyde + NAD(+) + H2O = a carboxylate + NADH + 2 H(+). This is Putative aldehyde dehydrogenase SSP0762 from Staphylococcus saprophyticus subsp. saprophyticus (strain ATCC 15305 / DSM 20229 / NCIMB 8711 / NCTC 7292 / S-41).